Here is a 323-residue protein sequence, read N- to C-terminus: Peridinin-chlorophyll a-binding protein 3 (323 aa).

A run of 2 repeats spans residues 1 to 173 (DGIA…RYVP) and 174 to 323 (DGPV…SAVV).

Homotrimer.

The protein localises to the plastid. The protein resides in the chloroplast. Its function is as follows. Water-soluble antenna for capture of solar energy in the blue-green range. Peridinin is an asymmetric carotenoid. The sequence is that of Peridinin-chlorophyll a-binding protein 3 from Amphidinium carterae (Dinoflagellate).